Consider the following 256-residue polypeptide: Imidazole glycerol phosphate synthase subunit HisF (256 aa).

Residues Asp13 and Asp132 contribute to the active site.

Belongs to the HisA/HisF family. In terms of assembly, heterodimer of HisH and HisF.

The protein resides in the cytoplasm. It catalyses the reaction 5-[(5-phospho-1-deoxy-D-ribulos-1-ylimino)methylamino]-1-(5-phospho-beta-D-ribosyl)imidazole-4-carboxamide + L-glutamine = D-erythro-1-(imidazol-4-yl)glycerol 3-phosphate + 5-amino-1-(5-phospho-beta-D-ribosyl)imidazole-4-carboxamide + L-glutamate + H(+). Its pathway is amino-acid biosynthesis; L-histidine biosynthesis; L-histidine from 5-phospho-alpha-D-ribose 1-diphosphate: step 5/9. In terms of biological role, IGPS catalyzes the conversion of PRFAR and glutamine to IGP, AICAR and glutamate. The HisF subunit catalyzes the cyclization activity that produces IGP and AICAR from PRFAR using the ammonia provided by the HisH subunit. The sequence is that of Imidazole glycerol phosphate synthase subunit HisF from Leptospira borgpetersenii serovar Hardjo-bovis (strain JB197).